The primary structure comprises 173 residues: Translation initiation factor IF-3 (173 aa).

It belongs to the IF-3 family. As to quaternary structure, monomer.

The protein localises to the cytoplasm. Functionally, IF-3 binds to the 30S ribosomal subunit and shifts the equilibrium between 70S ribosomes and their 50S and 30S subunits in favor of the free subunits, thus enhancing the availability of 30S subunits on which protein synthesis initiation begins. This is Translation initiation factor IF-3 from Methylorubrum extorquens (strain CM4 / NCIMB 13688) (Methylobacterium extorquens).